Consider the following 116-residue polypeptide: Protein Rev (116 aa).

Serine 5 and serine 8 each carry phosphoserine; by host CK2. A homomultimerization region spans residues 18–26 (LIKLLYQSN). A disordered region spans residues 21–49 (LLYQSNPPPNPEGTRQARRNRRRRWRERQ). The Nuclear localization signal and RNA-binding (RRE) signature appears at 34-50 (TRQARRNRRRRWRERQR). Residues 36–47 (QARRNRRRRWRE) are compositionally biased toward basic residues. Residues 73–84 (LQLPPLERLTLD) carry the Nuclear export signal and binding to XPO1 motif. Serine 92 and serine 99 each carry phosphoserine; by host. A disordered region spans residues 92–116 (SGTQGVGSPQILVESPTVLESGTKE).

Belongs to the HIV-1 REV protein family. Homomultimer; when bound to the RRE. Multimeric assembly is essential for activity and may involve XPO1. Binds to human KPNB1, XPO1, TNPO1, RANBP5 and IPO7. Interacts with the viral Integrase. Interacts with human KHDRBS1. Interacts with human NAP1; this interaction decreases Rev multimerization and stimulates its activity. Interacts with human DEAD-box helicases DDX3 and DDX24; these interactions may serve for viral RNA export to the cytoplasm and packaging, respectively. Interacts with human PSIP1; this interaction may inhibit HIV-1 DNA integration by promoting dissociation of the Integrase-LEDGF/p75 complex. Post-translationally, asymmetrically arginine dimethylated at one site by host PRMT6. Methylation impairs the RNA-binding activity and export of viral RNA from the nucleus to the cytoplasm. In terms of processing, phosphorylated by protein kinase CK2. Presence of, and maybe binding to the N-terminus of the regulatory beta subunit of CK2 is necessary for CK2-mediated Rev's phosphorylation.

It is found in the host nucleus. Its subcellular location is the host nucleolus. The protein resides in the host cytoplasm. In terms of biological role, escorts unspliced or incompletely spliced viral pre-mRNAs (late transcripts) out of the nucleus of infected cells. These pre-mRNAs carry a recognition sequence called Rev responsive element (RRE) located in the env gene, that is not present in fully spliced viral mRNAs (early transcripts). This function is essential since most viral proteins are translated from unspliced or partially spliced pre-mRNAs which cannot exit the nucleus by the pathway used by fully processed cellular mRNAs. Rev itself is translated from a fully spliced mRNA that readily exits the nucleus. Rev's nuclear localization signal (NLS) binds directly to KPNB1/Importin beta-1 without previous binding to KPNA1/Importin alpha-1. KPNB1 binds to the GDP bound form of RAN (Ran-GDP) and targets Rev to the nucleus. In the nucleus, the conversion from Ran-GDP to Ran-GTP dissociates Rev from KPNB1 and allows Rev's binding to the RRE in viral pre-mRNAs. Rev multimerization on the RRE via cooperative assembly exposes its nuclear export signal (NES) to the surface. Rev can then form a complex with XPO1/CRM1 and Ran-GTP, leading to nuclear export of the complex. Conversion from Ran-GTP to Ran-GDP mediates dissociation of the Rev/RRE/XPO1/RAN complex, so that Rev can return to the nucleus for a subsequent round of export. Beside KPNB1, also seems to interact with TNPO1/Transportin-1, RANBP5/IPO5 and IPO7/RANBP7 for nuclear import. The nucleoporin-like HRB/RIP is an essential cofactor that probably indirectly interacts with Rev to release HIV RNAs from the perinuclear region to the cytoplasm. The chain is Protein Rev from Homo sapiens (Human).